A 713-amino-acid chain; its full sequence is G-protein coupled receptor-associated protein LMBRD2 (713 aa).

Topologically, residues 1 to 3 (MSG) are extracellular. A helical transmembrane segment spans residues 4-21 (VALGIEIVSVFFLALFLL). Residues 22–32 (HRYGDFKKQHK) are Cytoplasmic-facing. Residues 33–53 (LVIVGTLLAWYLCFLIVFIIP) form a helical membrane-spanning segment. Residues 54-122 (LDVSTTIYNR…SKPWSYIPRG (69 aa)) are Extracellular-facing. Residues asparagine 76 and asparagine 89 are each glycosylated (N-linked (GlcNAc...) asparagine). The helical transmembrane segment at 123–143 (IMPIFWRVVYWTSQFLTWILM) threads the bilayer. The Cytoplasmic segment spans residues 144–167 (PFMQSYARSGGFSITGKIKTALIE). Residues 168–188 (NAIYYGTYLLIFGALLIYVAV) traverse the membrane as a helical segment. Residues 189–203 (NPNLHLEWYQLQTIG) lie on the Extracellular side of the membrane. The helical transmembrane segment at 204–224 (IAAANTWGLFLLVLLMGYGLV) threads the bilayer. Residues 225–404 (EIPRSQWNGA…ECLLRPWCSR (180 aa)) lie on the Cytoplasmic side of the membrane. Residues 246–314 (KAAKLMTEKA…DDYEDFEEKN (69 aa)) are a coiled coil. A helical membrane pass occupies residues 405–425 (ILAVILALFSTVVVWSECTFF). The Extracellular portion of the chain corresponds to 426-449 (SAKPVLSLFAVFIQQAEQTHNYIY). The chain crosses the membrane as a helical span at residues 450–470 (VEVVCFLSIFFLSICVYSTVF). The Cytoplasmic portion of the chain corresponds to 471–490 (RIRVFNYYYLASHHQTDAYS). The chain crosses the membrane as a helical span at residues 491-511 (LLFSGMLFCRLTPPLCLNFLG). The Extracellular portion of the chain corresponds to 512 to 538 (LTHMDVSISHQNIEPTAYTSIMGSLRV). The chain crosses the membrane as a helical span at residues 539-559 (LPLIADVFYIYYPMLVLILCI). Residues 560 to 713 (ATYFSLGTRC…QSNSRIFDDV (154 aa)) are Cytoplasmic-facing. The stretch at 587-620 (DLTDEGKELIKREKRKRQRLEDGETRRREWKERY) forms a coiled coil. The segment at 600 to 713 (KRKRQRLEDG…QSNSRIFDDV (114 aa)) is disordered. Over residues 605-629 (RLEDGETRRREWKERYPTNREDTSR) the composition is skewed to basic and acidic residues. A compositionally biased stretch (polar residues) spans 643–657 (TEMTTNRSSKYTRAS). The segment covering 658–667 (NRTERDRIEL) has biased composition (basic and acidic residues). Polar residues predominate over residues 701–713 (SMSQSNSRIFDDV).

This sequence belongs to the LIMR family.

Its subcellular location is the cell membrane. Its function is as follows. May associate with G-protein coupled receptors and regulate downstream signaling pathways. In Xenopus laevis (African clawed frog), this protein is G-protein coupled receptor-associated protein LMBRD2 (lmbrd2).